A 490-amino-acid polypeptide reads, in one-letter code: Cytochrome P450 90D2 (490 aa).

The helical transmembrane segment at 4–24 threads the bilayer; the sequence is AAAGWAAPAFAVAAVVIWVVL. Cys-437 serves as a coordination point for heme.

Belongs to the cytochrome P450 family. Requires heme as cofactor. In terms of tissue distribution, expressed at low levels leaf blades, shoot apex and elongating stem.

It localises to the membrane. The catalysed reaction is 6-deoxoteasterone + reduced [NADPH--hemoprotein reductase] + O2 = 3-dehydro-6-deoxoteasterone + oxidized [NADPH--hemoprotein reductase] + 2 H2O + H(+). Its pathway is plant hormone biosynthesis; brassinosteroid biosynthesis. Its function is as follows. Catalyzes the C6-oxidation step in brassinosteroids biosynthesis. May convert 6-deoxoteasterone (6-deoxoTE) to 3-dehydro-6-deoxoteasterone (6-deoxo3DT, 6-deoxo3DHT), and teasterone (TE) to 3-dehydroteasterone (3DT, 3-DHT). Involved in the elongation of leaf sheaths and stems. The polypeptide is Cytochrome P450 90D2 (Oryza sativa subsp. japonica (Rice)).